The sequence spans 488 residues: Zinc metalloproteinase-disintegrin VMP-II (488 aa).

A signal peptide spans 1–20 (MIQVLLVTICLAVFPYQGSS). Residues 21-191 (IILESGNVND…KASQSNIPPE (171 aa)) constitute a propeptide that is removed on maturation. Residues 198-396 (RYIELVVVAD…STTRCLHNEP (199 aa)) enclose the Peptidase M12B domain. Ca(2+)-binding residues include glutamate 201 and aspartate 285. Residue asparagine 296 is glycosylated (N-linked (GlcNAc...) asparagine). Disulfide bonds link cysteine 309/cysteine 391, cysteine 349/cysteine 373, and cysteine 351/cysteine 356. Histidine 334 lines the Zn(2+) pocket. Glutamate 335 is an active-site residue. Zn(2+)-binding residues include histidine 338 and histidine 344. Ca(2+) is bound by residues cysteine 391, asparagine 394, asparagine 409, glutamate 413, glutamate 416, and aspartate 419. Positions 404-488 (PPFCGNYFKE…ADCPRNGLYG (85 aa)) constitute a Disintegrin domain. 7 disulfide bridges follow: cysteine 407/cysteine 426, cysteine 418/cysteine 436, cysteine 420/cysteine 431, cysteine 430/cysteine 453, cysteine 444/cysteine 450, cysteine 449/cysteine 474, and cysteine 462/cysteine 481. Residues 466-468 (RGD) carry the Cell attachment site motif.

This sequence belongs to the venom metalloproteinase (M12B) family. P-II subfamily. P-IIb sub-subfamily. As to quaternary structure, homodimer; disulfide-linked (disintegrin). The cofactor is Zn(2+). As to expression, expressed by the venom gland.

Its subcellular location is the secreted. Functionally, zinc metalloproteinase-disintegrin VMP-II: inhibits ADP-induced platelet aggregation (probably by binding integrin alpha-IIb/beta-3 (ITGA2B/ITGB3)) and degrades fibrinogen. Recombinant disintegrin r-Cam-dis (413-488): this recombinant protein inhibits platelet adhesion to fibrinogen (IC(50) is 1 nM), inhibits collagen- (IC(50) is 18 nM) and ADP-induced (IC(50) is 6 nM) platelet aggregation, and also inhibits platelet function on clot retraction. May act by binding integrin alpha-IIb/beta-3 (ITGA2B/ITGB3). In Crotalus adamanteus (Eastern diamondback rattlesnake), this protein is Zinc metalloproteinase-disintegrin VMP-II.